The chain runs to 364 residues: MSGNSIGQNFVVTTFGESHGVALGCIIDGCPPGLELTEADMQHDLDRRRPGTSRYTTARREPDEVRILSGVFEGKTTGTSIGLLIENTDQRSQDYSNIKDLFRPGHADYTYQQKYGMRDYRGGGRSSARETAMRVAAGAVAKKYLKQVHCIEIYGFMSQLGPICAETIDLDQIEQNAFFFPDASKLEALDEYMRELKKSGDSIGAKISVIATGVPVGLGEPVFDRLDADIAHALMGINAVKGVEIGDGFGVVTQKGSEGRDLMSPQGFESNHAGGVLGGISSGQPIIAHIALKPTSSISVPGQSMTAQGEMAEVVTKGRHDPCVGIRAVPIAEAMLAIVLMDHLLRHRAQNQDVRSLTPVLGMR.

The interval 41–60 (MQHDLDRRRPGTSRYTTARR) is disordered. The NADP(+) site is built by R48 and R54. FMN-binding positions include 125–127 (RSS), 238–239 (NA), G278, 293–297 (KPTSS), and R319.

Belongs to the chorismate synthase family. In terms of assembly, homotetramer. FMNH2 is required as a cofactor.

It catalyses the reaction 5-O-(1-carboxyvinyl)-3-phosphoshikimate = chorismate + phosphate. Its pathway is metabolic intermediate biosynthesis; chorismate biosynthesis; chorismate from D-erythrose 4-phosphate and phosphoenolpyruvate: step 7/7. Catalyzes the anti-1,4-elimination of the C-3 phosphate and the C-6 proR hydrogen from 5-enolpyruvylshikimate-3-phosphate (EPSP) to yield chorismate, which is the branch point compound that serves as the starting substrate for the three terminal pathways of aromatic amino acid biosynthesis. This reaction introduces a second double bond into the aromatic ring system. The sequence is that of Chorismate synthase from Shewanella putrefaciens (strain CN-32 / ATCC BAA-453).